A 175-amino-acid chain; its full sequence is MMHLKNIKSENPKTKEQYQLTKNFDVIWLWSEDGKNWYEEVNNFQDDTIKIVYDENNIIVAITKDASTLNPEGFSVVEIPDITANRRADDSGKWMFKDGAVVKRIYTADEQQQQAESQKAALLSEAESVIQPLERAVRLNMATDEERARLESWERYSVLVSRVDTANPEWPQKPE.

It belongs to the tfa family.

The protein resides in the virion. The protein localises to the host cytoplasm. Chaperone involved in tail fiber assembly. Remains associated to the tail fiber and participates in the host receptor binding. Binds to the primary receptor. Two alternate tail fiber assembly proteins U and U' are encoded extending the host range of the virus. The sequence is that of Tail fiber assembly protein U (U) from Enterobacteriaceae (Bacteriophage Mu).